A 453-amino-acid polypeptide reads, in one-letter code: Glutamyl-tRNA(Gln) amidotransferase subunit A (453 aa).

Active-site charge relay system residues include Lys55 and Ser130. Ser154 acts as the Acyl-ester intermediate in catalysis.

The protein belongs to the amidase family. GatA subfamily. In terms of assembly, heterotrimer of A, B and C subunits.

The catalysed reaction is L-glutamyl-tRNA(Gln) + L-glutamine + ATP + H2O = L-glutaminyl-tRNA(Gln) + L-glutamate + ADP + phosphate + H(+). Functionally, allows the formation of correctly charged Gln-tRNA(Gln) through the transamidation of misacylated Glu-tRNA(Gln) in organisms which lack glutaminyl-tRNA synthetase. The reaction takes place in the presence of glutamine and ATP through an activated gamma-phospho-Glu-tRNA(Gln). This Aliarcobacter butzleri (strain RM4018) (Arcobacter butzleri) protein is Glutamyl-tRNA(Gln) amidotransferase subunit A.